Here is a 108-residue protein sequence, read N- to C-terminus: Small cysteine and glycine repeat-containing protein 8 (108 aa).

The interval 4 to 84 (CGCGGCGGGC…RRTCSSCGCG (81 aa)) is 12 X 2 AA repeats of CG.

Belongs to the KRTAP type 28 family.

Functionally, in the hair cortex, hair keratin intermediate filaments are embedded in an interfilamentous matrix, consisting of hair keratin-associated proteins (KRTAP), which are essential for the formation of a rigid and resistant hair shaft through their extensive disulfide bond cross-linking with abundant cysteine residues of hair keratins. The matrix proteins include the high-sulfur and high-glycine-tyrosine keratins. This chain is Small cysteine and glycine repeat-containing protein 8, found in Homo sapiens (Human).